Consider the following 344-residue polypeptide: Uroporphyrinogen decarboxylase (344 aa).

Substrate contacts are provided by residues 24 to 28 (RQAGR), F43, D74, Y151, S206, and H323.

This sequence belongs to the uroporphyrinogen decarboxylase family. In terms of assembly, homodimer.

It is found in the cytoplasm. The enzyme catalyses uroporphyrinogen III + 4 H(+) = coproporphyrinogen III + 4 CO2. The protein operates within porphyrin-containing compound metabolism; protoporphyrin-IX biosynthesis; coproporphyrinogen-III from 5-aminolevulinate: step 4/4. Catalyzes the decarboxylation of four acetate groups of uroporphyrinogen-III to yield coproporphyrinogen-III. The polypeptide is Uroporphyrinogen decarboxylase (Rhodobacter capsulatus (Rhodopseudomonas capsulata)).